Here is a 631-residue protein sequence, read N- to C-terminus: Dolichyl-diphosphooligosaccharide--protein glycosyltransferase subunit 2 (631 aa).

The N-terminal stretch at 1-22 (MAPPGSSAVFLLALTITASVQA) is a signal peptide. Topologically, residues 23–540 (LTPTHYLTKQ…REPEKRPPTV (518 aa)) are lumenal. Asparagine 106 carries N-linked (GlcNAc...) asparagine glycosylation. Lysine 154 participates in a covalent cross-link: Glycyl lysine isopeptide (Lys-Gly) (interchain with G-Cter in ubiquitin). A helical transmembrane segment spans residues 541 to 561 (VSNTFTALILSPLLLLFALWI). Residues 562-571 (RIGANVSNFT) lie on the Cytoplasmic side of the membrane. Residues 572–592 (FAPSTVIFHLGHAAMLGLMYI) traverse the membrane as a helical segment. Residues 593–596 (YWTQ) lie on the Lumenal side of the membrane. Residues 597–617 (LNMFQTLKYLAVLGTVTFLAG) traverse the membrane as a helical segment. At 618–631 (NRMLAQHAVKRTAH) the chain is on the cytoplasmic side.

The protein belongs to the SWP1 family. Component of the oligosaccharyltransferase (OST) complex. OST exists in two different complex forms which contain common core subunits RPN1, RPN2, OST48, OST4, DAD1 and TMEM258, either STT3A or STT3B as catalytic subunits, and form-specific accessory subunits. STT3A complex assembly occurs through the formation of 3 subcomplexes. Subcomplex 1 contains RPN1 and TMEM258, subcomplex 2 contains the STT3A-specific subunits STT3A, DC2/OSTC, and KCP2 as well as the core subunit OST4, and subcomplex 3 contains RPN2, DAD1, and OST48. The STT3A complex can form stable complexes with the Sec61 complex or with both the Sec61 and TRAP complexes. Interacts with DDI2. Interacts with TMEM35A/NACHO.

It is found in the endoplasmic reticulum. The protein localises to the endoplasmic reticulum membrane. It participates in protein modification; protein glycosylation. Subunit of the oligosaccharyl transferase (OST) complex that catalyzes the initial transfer of a defined glycan (Glc(3)Man(9)GlcNAc(2) in eukaryotes) from the lipid carrier dolichol-pyrophosphate to an asparagine residue within an Asn-X-Ser/Thr consensus motif in nascent polypeptide chains, the first step in protein N-glycosylation. N-glycosylation occurs cotranslationally and the complex associates with the Sec61 complex at the channel-forming translocon complex that mediates protein translocation across the endoplasmic reticulum (ER). All subunits are required for a maximal enzyme activity. This chain is Dolichyl-diphosphooligosaccharide--protein glycosyltransferase subunit 2, found in Mus musculus (Mouse).